A 181-amino-acid polypeptide reads, in one-letter code: ATP-dependent protease subunit ClpQ (181 aa).

Serine 2 is an active-site residue. Positions 165, 168, and 171 each coordinate Na(+).

It belongs to the peptidase T1B family. HslV subfamily. As to quaternary structure, a double ring-shaped homohexamer of ClpQ is capped on each side by a ring-shaped ClpY homohexamer. The assembly of the ClpQ/ClpY complex is dependent on binding of ATP.

The protein localises to the cytoplasm. In terms of biological role, protease subunit of a proteasome-like degradation complex. The chain is ATP-dependent protease subunit ClpQ (clpQ) from Bacillus velezensis (strain DSM 23117 / BGSC 10A6 / LMG 26770 / FZB42) (Bacillus amyloliquefaciens subsp. plantarum).